The following is a 412-amino-acid chain: AA9 family lytic polysaccharide monooxygenase A (412 aa).

The first 20 residues, 1–20, serve as a signal peptide directing secretion; it reads MKTTTYSLLALAAASKLASA. 2 residues coordinate Cu(2+): His-21 and His-103. Residues Cys-63 and Cys-186 are joined by a disulfide bond. A glycan (N-linked (GlcNAc...) asparagine) is linked at Asn-151. Position 172 (His-172) interacts with O2. Tyr-183 lines the Cu(2+) pocket. N-linked (GlcNAc...) asparagine glycans are attached at residues Asn-334 and Asn-385. The region spanning 373-409 is the CBM1 domain; it reads GVAKMYERCGGINHTGPTTCESGSVCKKWNPYYYQCV.

Belongs to the polysaccharide monooxygenase AA9 family. It depends on Cu(2+) as a cofactor.

The protein resides in the secreted. It carries out the reaction [(1-&gt;4)-beta-D-glucosyl]n+m + reduced acceptor + O2 = 4-dehydro-beta-D-glucosyl-[(1-&gt;4)-beta-D-glucosyl]n-1 + [(1-&gt;4)-beta-D-glucosyl]m + acceptor + H2O.. Lytic polysaccharide monooxygenase (LPMO) that depolymerizes crystalline and amorphous polysaccharides via the oxidation of scissile alpha- or beta-(1-4)-glycosidic bonds, yielding C4 oxidation products. Catalysis by LPMOs requires the reduction of the active-site copper from Cu(II) to Cu(I) by a reducing agent and H(2)O(2) or O(2) as a cosubstrate. This Aspergillus niger (strain ATCC MYA-4892 / CBS 513.88 / FGSC A1513) protein is AA9 family lytic polysaccharide monooxygenase A (eglD).